The sequence spans 222 residues: Pyridoxal phosphate homeostasis protein (222 aa).

Position 35 is an N6-(pyridoxal phosphate)lysine (K35).

This sequence belongs to the pyridoxal phosphate-binding protein YggS/PROSC family.

Pyridoxal 5'-phosphate (PLP)-binding protein, which is involved in PLP homeostasis. This is Pyridoxal phosphate homeostasis protein from Helicobacter pylori (strain ATCC 700392 / 26695) (Campylobacter pylori).